The chain runs to 98 residues: Large ribosomal subunit protein uL23 (98 aa).

Belongs to the universal ribosomal protein uL23 family. In terms of assembly, part of the 50S ribosomal subunit. Contacts protein L29, and trigger factor when it is bound to the ribosome.

In terms of biological role, one of the early assembly proteins it binds 23S rRNA. One of the proteins that surrounds the polypeptide exit tunnel on the outside of the ribosome. Forms the main docking site for trigger factor binding to the ribosome. In Methylobacterium nodulans (strain LMG 21967 / CNCM I-2342 / ORS 2060), this protein is Large ribosomal subunit protein uL23.